The sequence spans 308 residues: tRNA dimethylallyltransferase (308 aa).

Residue 14–21 participates in ATP binding; the sequence is GPTASGKT. 16-21 is a binding site for substrate; that stretch reads TASGKT. Interaction with substrate tRNA regions lie at residues 39–42, 163–167, and 244–249; these read DSAL, QRLSR, and RCVGYR.

It belongs to the IPP transferase family. As to quaternary structure, monomer. Mg(2+) serves as cofactor.

The enzyme catalyses adenosine(37) in tRNA + dimethylallyl diphosphate = N(6)-dimethylallyladenosine(37) in tRNA + diphosphate. Catalyzes the transfer of a dimethylallyl group onto the adenine at position 37 in tRNAs that read codons beginning with uridine, leading to the formation of N6-(dimethylallyl)adenosine (i(6)A). In Shewanella oneidensis (strain ATCC 700550 / JCM 31522 / CIP 106686 / LMG 19005 / NCIMB 14063 / MR-1), this protein is tRNA dimethylallyltransferase.